The chain runs to 337 residues: Thiazole synthase (337 aa).

Residues 1–41 (MSQHPLRPAGSRPGDSPPDGSCPDGLAGGGSAVGGGGGGEA) are disordered. The span at 10–25 (GSRPGDSPPDGSCPDG) shows a compositional bias: low complexity. Gly residues predominate over residues 26-41 (LAGGGSAVGGGGGGEA). Lysine 144 functions as the Schiff-base intermediate with DXP in the catalytic mechanism. Residues glycine 205, 231–232 (AG), and 253–254 (NT) contribute to the 1-deoxy-D-xylulose 5-phosphate site. Residues 302–337 (FLGAHPSPASHPSPASPVPSVSRATSPAAVVGEASR) are disordered. Residues 319–337 (VPSVSRATSPAAVVGEASR) are compositionally biased toward low complexity.

This sequence belongs to the ThiG family. In terms of assembly, homotetramer. Forms heterodimers with either ThiH or ThiS.

The protein resides in the cytoplasm. The enzyme catalyses [ThiS sulfur-carrier protein]-C-terminal-Gly-aminoethanethioate + 2-iminoacetate + 1-deoxy-D-xylulose 5-phosphate = [ThiS sulfur-carrier protein]-C-terminal Gly-Gly + 2-[(2R,5Z)-2-carboxy-4-methylthiazol-5(2H)-ylidene]ethyl phosphate + 2 H2O + H(+). Its pathway is cofactor biosynthesis; thiamine diphosphate biosynthesis. Its function is as follows. Catalyzes the rearrangement of 1-deoxy-D-xylulose 5-phosphate (DXP) to produce the thiazole phosphate moiety of thiamine. Sulfur is provided by the thiocarboxylate moiety of the carrier protein ThiS. In vitro, sulfur can be provided by H(2)S. In Frankia casuarinae (strain DSM 45818 / CECT 9043 / HFP020203 / CcI3), this protein is Thiazole synthase.